Here is a 216-residue protein sequence, read N- to C-terminus: Uracil-DNA glycosylase (216 aa).

The Proton acceptor role is filled by D60.

Belongs to the uracil-DNA glycosylase (UDG) superfamily. UNG family.

It is found in the cytoplasm. It carries out the reaction Hydrolyzes single-stranded DNA or mismatched double-stranded DNA and polynucleotides, releasing free uracil.. Excises uracil residues from the DNA which can arise as a result of misincorporation of dUMP residues by DNA polymerase or due to deamination of cytosine. The polypeptide is Uracil-DNA glycosylase (Psychromonas ingrahamii (strain DSM 17664 / CCUG 51855 / 37)).